The chain runs to 84 residues: Large ribosomal subunit protein bL31B (84 aa).

This sequence belongs to the bacterial ribosomal protein bL31 family. Type B subfamily. As to quaternary structure, part of the 50S ribosomal subunit.

The sequence is that of Large ribosomal subunit protein bL31B from Bacteroides thetaiotaomicron (strain ATCC 29148 / DSM 2079 / JCM 5827 / CCUG 10774 / NCTC 10582 / VPI-5482 / E50).